A 384-amino-acid chain; its full sequence is Mannitol-1-phosphate 5-dehydrogenase (384 aa).

Position 4 to 15 (4 to 15) interacts with NAD(+); that stretch reads AVHFGAGNIGRG.

Belongs to the mannitol dehydrogenase family.

It catalyses the reaction D-mannitol 1-phosphate + NAD(+) = beta-D-fructose 6-phosphate + NADH + H(+). This is Mannitol-1-phosphate 5-dehydrogenase from Lacticaseibacillus paracasei (strain ATCC 334 / BCRC 17002 / CCUG 31169 / CIP 107868 / KCTC 3260 / NRRL B-441) (Lactobacillus paracasei).